Reading from the N-terminus, the 451-residue chain is Phosphoglucosamine mutase (451 aa).

Ser-102 functions as the Phosphoserine intermediate in the catalytic mechanism. Ser-102, Asp-243, Asp-245, and Asp-247 together coordinate Mg(2+). A Phosphoserine modification is found at Ser-102.

It belongs to the phosphohexose mutase family. The cofactor is Mg(2+). Activated by phosphorylation.

It catalyses the reaction alpha-D-glucosamine 1-phosphate = D-glucosamine 6-phosphate. Catalyzes the conversion of glucosamine-6-phosphate to glucosamine-1-phosphate. The chain is Phosphoglucosamine mutase from Brucella canis (strain ATCC 23365 / NCTC 10854 / RM-666).